A 73-amino-acid polypeptide reads, in one-letter code: N-terminal-borealin-like protein (73 aa).

It belongs to the borealin family. As to quaternary structure, component of the aurora kinase complex composed of at least BIR1, BNL1, IPL1 and SLI15.

The protein resides in the nucleus. The protein localises to the cytoplasm. It is found in the cytoskeleton. Its subcellular location is the spindle. Its function is as follows. Component of the aurora kinase complex, also called chromosomal passenger complex (CPC), essential for chromosome segregation and metaphase chromosome alignment. Mediates the SLI15-BIR1 interaction within the CPC. In Saccharomyces cerevisiae (strain ATCC 204508 / S288c) (Baker's yeast), this protein is N-terminal-borealin-like protein (NBL1).